The chain runs to 291 residues: Phosphoribosylaminoimidazole-succinocarboxamide synthase (291 aa).

Belongs to the SAICAR synthetase family.

It carries out the reaction 5-amino-1-(5-phospho-D-ribosyl)imidazole-4-carboxylate + L-aspartate + ATP = (2S)-2-[5-amino-1-(5-phospho-beta-D-ribosyl)imidazole-4-carboxamido]succinate + ADP + phosphate + 2 H(+). It functions in the pathway purine metabolism; IMP biosynthesis via de novo pathway; 5-amino-1-(5-phospho-D-ribosyl)imidazole-4-carboxamide from 5-amino-1-(5-phospho-D-ribosyl)imidazole-4-carboxylate: step 1/2. This chain is Phosphoribosylaminoimidazole-succinocarboxamide synthase (ADE1), found in Candida maltosa (Yeast).